Here is a 176-residue protein sequence, read N- to C-terminus: Probable superoxide oxidase CybB (176 aa).

The next 4 membrane-spanning stretches (helical) occupy residues C7 to I27, I44 to L64, V85 to L105, and H137 to L157. The heme b site is built by H13 and H45. 2 residues coordinate heme b: H137 and H151.

It belongs to the cytochrome b561 family. Heme b is required as a cofactor.

The protein resides in the cell inner membrane. It carries out the reaction a ubiquinol + 2 O2 = 2 superoxide + a ubiquinone + 2 H(+). In terms of biological role, B-type di-heme cytochrome. Catalyzes the oxidation of superoxide to molecular oxygen and transfers the extracted electrons to ubiquinone through the two hemes. In Yersinia pestis, this protein is Probable superoxide oxidase CybB (cybB).